The primary structure comprises 385 residues: Tyrosine--tRNA ligase 1, cytoplasmic (385 aa).

The 'HIGH' region motif lies at 77–85; that stretch reads PSGRMHIAQ. L-tyrosine contacts are provided by Tyr200, Gln204, Asp207, and Gln222. The 'KMSKS' region motif lies at 259–263; sequence KMSKS. Lys262 is an ATP binding site.

The protein belongs to the class-I aminoacyl-tRNA synthetase family.

It is found in the cytoplasm. The protein localises to the cytosol. The enzyme catalyses tRNA(Tyr) + L-tyrosine + ATP = L-tyrosyl-tRNA(Tyr) + AMP + diphosphate + H(+). Its function is as follows. Catalyzes the attachment of tyrosine to tRNA(Tyr) in a two-step reaction: tyrosine is first activated by ATP to form Tyr-AMP and then transferred to the acceptor end of tRNA(Tyr). The sequence is that of Tyrosine--tRNA ligase 1, cytoplasmic from Arabidopsis thaliana (Mouse-ear cress).